A 155-amino-acid chain; its full sequence is Small ribosomal subunit protein uS7cz/uS7cy (155 aa).

Belongs to the universal ribosomal protein uS7 family. Part of the 30S ribosomal subunit.

The protein resides in the plastid. Its subcellular location is the chloroplast. In terms of biological role, one of the primary rRNA binding proteins, it binds directly to 16S rRNA where it nucleates assembly of the head domain of the 30S subunit. In Angiopteris evecta (Mule's foot fern), this protein is Small ribosomal subunit protein uS7cz/uS7cy (rps7-A).